A 186-amino-acid chain; its full sequence is Elongation factor P (186 aa).

This sequence belongs to the elongation factor P family.

It is found in the cytoplasm. Its pathway is protein biosynthesis; polypeptide chain elongation. Involved in peptide bond synthesis. Stimulates efficient translation and peptide-bond synthesis on native or reconstituted 70S ribosomes in vitro. Probably functions indirectly by altering the affinity of the ribosome for aminoacyl-tRNA, thus increasing their reactivity as acceptors for peptidyl transferase. This is Elongation factor P from Brucella ovis (strain ATCC 25840 / 63/290 / NCTC 10512).